A 247-amino-acid chain; its full sequence is Membrane-spanning 4-domains subfamily A member 6D (247 aa).

The Cytoplasmic portion of the chain corresponds to 1–46 (MIPQVVTSETVTVISPNGISFPQTDKPQPSHQSQDSLKKHLKAEIK). The helical transmembrane segment at 47–67 (VMAAIQIMCAVMVLSLGIILA) threads the bilayer. The Extracellular portion of the chain corresponds to 68 to 80 (SVPSNLHFTSVFS). The chain crosses the membrane as a helical span at residues 81 to 101 (ILLESGYPFVGALFFAISGIL). Residues 102 to 121 (SIVTEKKMTKPLVHSSLALS) are Cytoplasmic-facing. A helical transmembrane segment spans residues 122–142 (ILSVLSALTGIAILSVSLAAL). Over 143 to 180 (EPALQQCKLAFTQLDTTQDAYHFFSPEPLNSCFVAKAA) the chain is Extracellular. Residues 181–201 (LTGVFSLMLISSVLELGLAVL) traverse the membrane as a helical segment. Topologically, residues 202–247 (TATLWWKQSSSAFSGNVIFLSQNSKNKSSVSSESLCNPTYENILTS) are cytoplasmic. At Ser235 the chain carries Phosphoserine.

This sequence belongs to the MS4A family. In terms of tissue distribution, expressed in thymus, spleen, intestine, colon, testis, heart, liver, brain, kidney, peripheral lymph node and bone marrow.

It localises to the membrane. In terms of biological role, may be involved in signal transduction as a component of a multimeric receptor complex. This is Membrane-spanning 4-domains subfamily A member 6D (Ms4a6d) from Mus musculus (Mouse).